The following is a 98-amino-acid chain: NADH-ubiquinone oxidoreductase chain 4L (98 aa).

Transmembrane regions (helical) follow at residues 2-22 (PSISINITLAFTTALLGMLMF), 29-49 (SLLCLEGMMLSMFILSTLIIL), and 61-81 (ILLLVFAACEAAIGLALLVMI).

It belongs to the complex I subunit 4L family. In terms of assembly, core subunit of respiratory chain NADH dehydrogenase (Complex I) which is composed of 45 different subunits.

It localises to the mitochondrion inner membrane. The catalysed reaction is a ubiquinone + NADH + 5 H(+)(in) = a ubiquinol + NAD(+) + 4 H(+)(out). Core subunit of the mitochondrial membrane respiratory chain NADH dehydrogenase (Complex I) which catalyzes electron transfer from NADH through the respiratory chain, using ubiquinone as an electron acceptor. Part of the enzyme membrane arm which is embedded in the lipid bilayer and involved in proton translocation. The polypeptide is NADH-ubiquinone oxidoreductase chain 4L (MT-ND4L) (Mirza coquereli (Coquerel's giant mouse lemur)).